Consider the following 379-residue polypeptide: Anhydro-N-acetylmuramic acid kinase (379 aa).

Position 9-16 (9-16) interacts with ATP; sequence GTSVDGID.

Belongs to the anhydro-N-acetylmuramic acid kinase family.

The catalysed reaction is 1,6-anhydro-N-acetyl-beta-muramate + ATP + H2O = N-acetyl-D-muramate 6-phosphate + ADP + H(+). Its pathway is amino-sugar metabolism; 1,6-anhydro-N-acetylmuramate degradation. It participates in cell wall biogenesis; peptidoglycan recycling. Its function is as follows. Catalyzes the specific phosphorylation of 1,6-anhydro-N-acetylmuramic acid (anhMurNAc) with the simultaneous cleavage of the 1,6-anhydro ring, generating MurNAc-6-P. Is required for the utilization of anhMurNAc either imported from the medium or derived from its own cell wall murein, and thus plays a role in cell wall recycling. The polypeptide is Anhydro-N-acetylmuramic acid kinase (Acaryochloris marina (strain MBIC 11017)).